The primary structure comprises 1068 residues: Sucrose-phosphate synthase (1068 aa).

Disordered stretches follow at residues 18–47 (HTSS…GAHM) and 118–139 (KEQE…SEGE). A compositionally biased stretch (gly residues) spans 23–32 (GAGGGGGGGD). A compositionally biased stretch (basic and acidic residues) spans 118–128 (KEQEQVRREAT).

It belongs to the glycosyltransferase 1 family. As to quaternary structure, homodimer or homotetramer.

The catalysed reaction is beta-D-fructose 6-phosphate + UDP-alpha-D-glucose = sucrose 6(F)-phosphate + UDP + H(+). The protein operates within glycan biosynthesis; sucrose biosynthesis; sucrose from D-fructose 6-phosphate and UDP-alpha-D-glucose: step 1/2. Activity is regulated by phosphorylation and moderated by concentration of metabolites and light. Its function is as follows. Plays a role in photosynthetic sucrose synthesis by catalyzing the rate-limiting step of sucrose biosynthesis from UDP-glucose and fructose- 6-phosphate. Involved in the regulation of carbon partitioning in the leaves of plants. May regulate the synthesis of sucrose and therefore play a major role as a limiting factor in the export of photoassimilates out of the leaf. Plays a role for sucrose availability that is essential for plant growth and fiber elongation. The polypeptide is Sucrose-phosphate synthase (Zea mays (Maize)).